Reading from the N-terminus, the 206-residue chain is ATP phosphoribosyltransferase (206 aa).

The protein belongs to the ATP phosphoribosyltransferase family. Short subfamily. As to quaternary structure, heteromultimer composed of HisG and HisZ subunits.

Its subcellular location is the cytoplasm. It catalyses the reaction 1-(5-phospho-beta-D-ribosyl)-ATP + diphosphate = 5-phospho-alpha-D-ribose 1-diphosphate + ATP. It participates in amino-acid biosynthesis; L-histidine biosynthesis; L-histidine from 5-phospho-alpha-D-ribose 1-diphosphate: step 1/9. Functionally, catalyzes the condensation of ATP and 5-phosphoribose 1-diphosphate to form N'-(5'-phosphoribosyl)-ATP (PR-ATP). Has a crucial role in the pathway because the rate of histidine biosynthesis seems to be controlled primarily by regulation of HisG enzymatic activity. In Sulfurovum sp. (strain NBC37-1), this protein is ATP phosphoribosyltransferase.